The sequence spans 268 residues: Small ribosomal subunit protein eS1 (268 aa).

Disordered regions lie at residues 1-21 (MAVG…KKKV) and 238-268 (GGGK…QEAV).

The protein belongs to the eukaryotic ribosomal protein eS1 family. In terms of assembly, component of the small ribosomal subunit. Mature ribosomes consist of a small (40S) and a large (60S) subunit. The 40S subunit contains about 33 different proteins and 1 molecule of RNA (18S). The 60S subunit contains about 49 different proteins and 3 molecules of RNA (28S, 5.8S and 5S).

It is found in the cytoplasm. Essential for oogenesis; required for late follicle cell development. This is Small ribosomal subunit protein eS1 from Drosophila ananassae (Fruit fly).